Reading from the N-terminus, the 318-residue chain is DNA-directed RNA polymerase subunit alpha (318 aa).

Positions 1–232 (MAHQRIVGPT…NLFSPLQNVR (232 aa)) are alpha N-terminal domain (alpha-NTD). Residues 246-318 (KMTEVLVEEL…HLPKEKFTKD (73 aa)) are alpha C-terminal domain (alpha-CTD).

The protein belongs to the RNA polymerase alpha chain family. In plastids the minimal PEP RNA polymerase catalytic core is composed of four subunits: alpha, beta, beta', and beta''. When a (nuclear-encoded) sigma factor is associated with the core the holoenzyme is formed, which can initiate transcription.

The protein localises to the plastid. The protein resides in the chloroplast. The enzyme catalyses RNA(n) + a ribonucleoside 5'-triphosphate = RNA(n+1) + diphosphate. In terms of biological role, DNA-dependent RNA polymerase catalyzes the transcription of DNA into RNA using the four ribonucleoside triphosphates as substrates. This Chlorokybus atmophyticus (Soil alga) protein is DNA-directed RNA polymerase subunit alpha.